The following is a 502-amino-acid chain: Cytochrome P450 71B20 (502 aa).

A helical membrane pass occupies residues 1 to 21; that stretch reads MAISFLCFCLITLASLIFFAK. Cys-444 is a heme binding site.

Belongs to the cytochrome P450 family. Heme is required as a cofactor.

It localises to the membrane. This is Cytochrome P450 71B20 (CYP71B20) from Arabidopsis thaliana (Mouse-ear cress).